The sequence spans 27 residues: FRLSPAARNILEKHSLDASQGTATGPR.

The segment at 1–27 is disordered; the sequence is FRLSPAARNILEKHSLDASQGTATGPR. Residues 2–27 enclose the Peripheral subunit-binding (PSBD) domain; that stretch reads RLSPAARNILEKHSLDASQGTATGPR. Position 13 is an N6-acetyllysine (Lys-13). At Ser-15 the chain carries Phosphoserine. A compositionally biased stretch (polar residues) spans 17-27; it reads DASQGTATGPR.

The protein belongs to the 2-oxoacid dehydrogenase family. As to quaternary structure, part of the inner core of the multimeric pyruvate dehydrogenase complex that is composed of about 48 DLAT and 12 PDHX molecules. This core binds multiple copies of pyruvate dehydrogenase (subunits PDH1A and PDHB, E1), dihydrolipoamide acetyltransferase (DLAT, E2) and lipoamide dehydrogenase (DLD, E3). Interacts with SIRT4. Interacts with DLD.

It localises to the mitochondrion matrix. Functionally, required for anchoring dihydrolipoamide dehydrogenase (E3) to the dihydrolipoamide transacetylase (E2) core of the pyruvate dehydrogenase complexes of eukaryotes. This specific binding is essential for a functional PDH complex. This Mesocricetus auratus (Golden hamster) protein is Pyruvate dehydrogenase protein X component, mitochondrial.